The sequence spans 367 residues: Protein TlpB (367 aa).

5 helical membrane passes run 15–35 (ILISFLFIISAIAKMYPSPYF), 53–73 (IIAPWFSRILIGIELALGILI), 83–103 (IIPITILLLAVFVGHLSYVTF), 124–144 (IQAIIKNIIAIFLLVYLFFLL), and 153–173 (FYVVIGITLATIISLFLLAPI).

The protein localises to the membrane. The polypeptide is Protein TlpB (tlpB) (Flavobacterium psychrophilum).